The sequence spans 660 residues: U-box domain-containing protein 13 (660 aa).

Residues 227–252 (DDNGEEQKVGVNSRSNGQTSTAASQK) form a disordered region. The segment covering 236–250 (GVNSRSNGQTSTAAS) has biased composition (polar residues). Residues 255–329 (VIPDDFRCPI…AQWCEANDIE (75 aa)) enclose the U-box domain. ARM repeat units lie at residues 384-423 (ADNR…NLSI), 425-464 (ENNK…SLSV), 466-505 (DENK…NLCI), 507-546 (QGNK…ILSS), and 548-587 (PEGK…HLCS). Positions 631-660 (AEQQKETAVSQPEEEAEPTHPESTTEAADT) are disordered. Polar residues predominate over residues 651-660 (PESTTEAADT).

In terms of assembly, binds to SD11, SD16, SD17, SD18, SD113, SD129 and SD25. Post-translationally, phosphorylated by SD1-6 and SD1-7.

Its subcellular location is the nucleus. It localises to the cytoplasm. It carries out the reaction S-ubiquitinyl-[E2 ubiquitin-conjugating enzyme]-L-cysteine + [acceptor protein]-L-lysine = [E2 ubiquitin-conjugating enzyme]-L-cysteine + N(6)-ubiquitinyl-[acceptor protein]-L-lysine.. Its pathway is protein modification; protein ubiquitination. In terms of biological role, functions as an E3 ubiquitin ligase. The chain is U-box domain-containing protein 13 (PUB13) from Arabidopsis thaliana (Mouse-ear cress).